The following is a 735-amino-acid chain: 1,4-alpha-glucan branching enzyme GlgB 1 (735 aa).

The active-site Nucleophile is aspartate 418. Glutamate 471 acts as the Proton donor in catalysis.

It belongs to the glycosyl hydrolase 13 family. GlgB subfamily. In terms of assembly, monomer.

It carries out the reaction Transfers a segment of a (1-&gt;4)-alpha-D-glucan chain to a primary hydroxy group in a similar glucan chain.. It participates in glycan biosynthesis; glycogen biosynthesis. Functionally, catalyzes the formation of the alpha-1,6-glucosidic linkages in glycogen by scission of a 1,4-alpha-linked oligosaccharide from growing alpha-1,4-glucan chains and the subsequent attachment of the oligosaccharide to the alpha-1,6 position. The sequence is that of 1,4-alpha-glucan branching enzyme GlgB 1 from Rhizobium etli (strain ATCC 51251 / DSM 11541 / JCM 21823 / NBRC 15573 / CFN 42).